The chain runs to 34 residues: Photosystem II reaction center protein M (34 aa).

A helical membrane pass occupies residues 5 to 25; that stretch reads ILAFIATALFILVPTAFLLII.

The protein belongs to the PsbM family. In terms of assembly, PSII is composed of 1 copy each of membrane proteins PsbA, PsbB, PsbC, PsbD, PsbE, PsbF, PsbH, PsbI, PsbJ, PsbK, PsbL, PsbM, PsbT, PsbX, PsbY, PsbZ, Psb30/Ycf12, at least 3 peripheral proteins of the oxygen-evolving complex and a large number of cofactors. It forms dimeric complexes.

It is found in the plastid. Its subcellular location is the chloroplast thylakoid membrane. Its function is as follows. One of the components of the core complex of photosystem II (PSII). PSII is a light-driven water:plastoquinone oxidoreductase that uses light energy to abstract electrons from H(2)O, generating O(2) and a proton gradient subsequently used for ATP formation. It consists of a core antenna complex that captures photons, and an electron transfer chain that converts photonic excitation into a charge separation. This subunit is found at the monomer-monomer interface. The chain is Photosystem II reaction center protein M from Calycanthus floridus var. glaucus (Eastern sweetshrub).